The chain runs to 700 residues: Acetoacetyl-CoA synthetase (700 aa).

A disordered region spans residues 1 to 35 (MTAVSANGKTTEKHENGAHTNGTTNGTTNGSMNGN). A compositionally biased stretch (low complexity) spans 18–35 (AHTNGTTNGTTNGSMNGN).

It belongs to the ATP-dependent AMP-binding enzyme family. In terms of tissue distribution, present in most cells of the organism.

The protein resides in the cytoplasm. It is found in the nucleus. It catalyses the reaction acetoacetate + ATP + CoA = acetoacetyl-CoA + AMP + diphosphate. In terms of biological role, activates acetoacetate to acetoacetyl-CoA. Negatively regulates let-60 Ras activity during vulval induction. The polypeptide is Acetoacetyl-CoA synthetase (sur-5) (Caenorhabditis elegans).